A 263-amino-acid polypeptide reads, in one-letter code: Hydroxyethylthiazole kinase (263 aa).

Substrate is bound at residue methionine 39. Residues lysine 115 and threonine 160 each coordinate ATP. Residue glycine 187 coordinates substrate.

It belongs to the Thz kinase family. Mg(2+) serves as cofactor.

The catalysed reaction is 5-(2-hydroxyethyl)-4-methylthiazole + ATP = 4-methyl-5-(2-phosphooxyethyl)-thiazole + ADP + H(+). It participates in cofactor biosynthesis; thiamine diphosphate biosynthesis; 4-methyl-5-(2-phosphoethyl)-thiazole from 5-(2-hydroxyethyl)-4-methylthiazole: step 1/1. Catalyzes the phosphorylation of the hydroxyl group of 4-methyl-5-beta-hydroxyethylthiazole (THZ). The protein is Hydroxyethylthiazole kinase of Staphylococcus aureus (strain COL).